The primary structure comprises 64 residues: Antimicrobial peptide THP2 (64 aa).

An N-terminal signal peptide occupies residues 1–28; that stretch reads MRILYLLFSLLFLALQVSPGLSSPKRDM. Disulfide bonds link cysteine 31–cysteine 57, cysteine 36–cysteine 51, and cysteine 41–cysteine 58.

Expressed in circulating heterophil granulocytes and bone marrow (at protein level).

The protein resides in the secreted. Its function is as follows. Antibacterial activity against the Gram-positive bacterium Staphylococcus aureus. Lacks antibacterial activity against the Gram-negative bacterium E.coli K-12. This chain is Antimicrobial peptide THP2, found in Meleagris gallopavo (Wild turkey).